The chain runs to 106 residues: NADH dehydrogenase [ubiquinone] 1 beta subcomplex subunit 10-B (106 aa).

Residues 1-25 (MGRKKGLPEFEESAPDGFDPENPYK) form a disordered region.

Belongs to the complex I NDUFB10 subunit family. As to quaternary structure, complex I is composed of at least 49 different subunits.

It is found in the mitochondrion inner membrane. Accessory subunit of the mitochondrial membrane respiratory chain NADH dehydrogenase (Complex I), that is believed not to be involved in catalysis. Complex I functions in the transfer of electrons from NADH to the respiratory chain. The immediate electron acceptor for the enzyme is believed to be ubiquinone. The polypeptide is NADH dehydrogenase [ubiquinone] 1 beta subcomplex subunit 10-B (Arabidopsis thaliana (Mouse-ear cress)).